A 250-amino-acid chain; its full sequence is MAEGGASKGGGEEPGKLPEPAEEESQVLRGTGHCKWFNVRMGFGFISMINREGSPLDIPVDVFVHQSKLFMEGFRSLKEGEPVEFTFKKSSKGLESIRVTGPGGSPCLGSERRPKGKTLQKRKPKGDRCYNCGGLDHHAKECSLPPQPKKCHYCQSIMHMVANCPHKNVAQPPASSQGRQEAESQPCTSTLPREVGGGHGCTSPPFPQEARAEISERSGRSPQEASSTKSSIAPEEQSKKGPSVQKRKKT.

Residues Met1–Gln26 are disordered. In terms of domain architecture, CSD spans Arg29–Pro102. Phosphoserine is present on residues Ser54, Ser96, Ser105, and Ser110. The interval Arg98–Gly126 is disordered. A Bipartite nuclear localization signal motif is present at residues Arg112–Lys125. Residues Pro114–Lys125 are compositionally biased toward basic residues. 2 consecutive CCHC-type zinc fingers follow at residues Asp127–Leu144 and Lys149–His166. 8 residues coordinate Zn(2+): Cys129, Cys132, His137, Cys142, Cys151, Cys154, His159, and Cys164. Residues Val169–Thr250 form a disordered region. Residues Pro173–Leu191 are compositionally biased toward polar residues. Ser203 carries the phosphoserine modification. The span at Ala210–Gly219 shows a compositional bias: basic and acidic residues. Polar residues predominate over residues Arg220 to Ser231. The Nucleolar localization signal motif lies at Lys239 to Thr250.

It belongs to the lin-28 family. Expressed at high levels in the placenta and, at mucher lower, in testis and fetal liver. Isoform 1 is only detected in placenta and in moderately and poorly differentiated hepatocellular carcinoma cells (at protein level). Isoform 2 is detected in fetal liver, non-tumor liver tissues, as well as well-differentiated tumor tissues (at protein level). Tends to be up-regulated in triple-negative (ER-,PR-,HER2-) breast tumors, as well as in liver, ovarian, and thyroid carcinomas.

The protein resides in the nucleus. The protein localises to the nucleolus. It localises to the cytoplasm. In terms of biological role, suppressor of microRNA (miRNA) biogenesis, including that of let-7 and possibly of miR107, miR-143 and miR-200c. Binds primary let-7 transcripts (pri-let-7), including pri-let-7g and pri-let-7a-1, and sequester them in the nucleolus, away from the microprocessor complex, hence preventing their processing into mature miRNA. Does not act on pri-miR21. The repression of let-7 expression is required for normal development and contributes to maintain the pluripotent state of embryonic stem cells by preventing let-7-mediated differentiation. When overexpressed, recruits ZCCHC11/TUT4 uridylyltransferase to pre-let-7 transcripts, leading to their terminal uridylation and degradation. This activity might not be relevant in vivo, as LIN28B-mediated inhibition of let-7 miRNA maturation appears to be ZCCHC11-independent. Interaction with target pre-miRNAs occurs via an 5'-GGAG-3' motif in the pre-miRNA terminal loop. Mediates MYC-induced let-7 repression. When overexpressed, isoform 1 stimulates growth of the breast adenocarcinoma cell line MCF-7. Isoform 2 has no effect on cell growth. The protein is Protein lin-28 homolog B (LIN28B) of Homo sapiens (Human).